Here is a 502-residue protein sequence, read N- to C-terminus: ATP synthase subunit alpha, chloroplastic (502 aa).

ATP is bound at residue 170–177 (GDRQTGKT).

It belongs to the ATPase alpha/beta chains family. In terms of assembly, F-type ATPases have 2 components, CF(1) - the catalytic core - and CF(0) - the membrane proton channel. CF(1) has five subunits: alpha(3), beta(3), gamma(1), delta(1), epsilon(1). CF(0) has four main subunits: a, b, b' and c.

It is found in the plastid. The protein localises to the chloroplast thylakoid membrane. The catalysed reaction is ATP + H2O + 4 H(+)(in) = ADP + phosphate + 5 H(+)(out). Functionally, produces ATP from ADP in the presence of a proton gradient across the membrane. The alpha chain is a regulatory subunit. In Rhodomonas salina (Cryptomonas salina), this protein is ATP synthase subunit alpha, chloroplastic.